The sequence spans 403 residues: Queuine tRNA-ribosyltransferase catalytic subunit 1 (403 aa).

Position 2 is an N-acetylalanine (alanine 2). Aspartate 105 functions as the Proton acceptor in the catalytic mechanism. A queuine-binding site is contributed by 105-109 (DSGGF). Serine 139 is subject to Phosphoserine. Residues aspartate 159, glutamine 202, and glycine 229 each contribute to the queuine site. Positions 260–266 (GVGYATD) are RNA binding. Aspartate 279 acts as the Nucleophile in catalysis. An RNA binding; important for wobble base 34 recognition region spans residues 284–288 (TRTAR). Zn(2+)-binding residues include cysteine 317, cysteine 319, cysteine 322, and histidine 348.

Belongs to the queuine tRNA-ribosyltransferase family. Heterodimer of a catalytic subunit QTRT1 and an accessory subunit QTRT2. Zn(2+) serves as cofactor.

It is found in the cytoplasm. It localises to the mitochondrion outer membrane. The catalysed reaction is guanosine(34) in tRNA + queuine = queuosine(34) in tRNA + guanine. Its function is as follows. Catalytic subunit of the queuine tRNA-ribosyltransferase (TGT) that catalyzes the base-exchange of a guanine (G) residue with queuine (Q) at position 34 (anticodon wobble position) in tRNAs with GU(N) anticodons (tRNA-Asp, -Asn, -His and -Tyr), resulting in the hypermodified nucleoside queuosine (7-(((4,5-cis-dihydroxy-2-cyclopenten-1-yl)amino)methyl)-7-deazaguanosine). Catalysis occurs through a double-displacement mechanism. The nucleophile active site attacks the C1' of nucleotide 34 to detach the guanine base from the RNA, forming a covalent enzyme-RNA intermediate. The proton acceptor active site deprotonates the incoming queuine, allowing a nucleophilic attack on the C1' of the ribose to form the product. The chain is Queuine tRNA-ribosyltransferase catalytic subunit 1 from Rattus norvegicus (Rat).